Reading from the N-terminus, the 542-residue chain is CTP synthase (542 aa).

An amidoligase domain region spans residues 1–265 (MARYVFITGG…DSEVLSAFGI (265 aa)). Ser13 contributes to the CTP binding site. UTP is bound at residue Ser13. 14–19 (SLGKGI) is a binding site for ATP. An L-glutamine-binding site is contributed by Tyr54. An ATP-binding site is contributed by Asp71. Positions 71 and 139 each coordinate Mg(2+). CTP contacts are provided by residues 146-148 (DIE), 186-191 (KTKPTQ), and Lys222. UTP-binding positions include 186 to 191 (KTKPTQ) and Lys222. One can recognise a Glutamine amidotransferase type-1 domain in the interval 291–541 (TIAIVGKYTG…IEAAIEQSRL (251 aa)). Gly353 is an L-glutamine binding site. Cys380 serves as the catalytic Nucleophile; for glutamine hydrolysis. L-glutamine contacts are provided by residues 381 to 384 (FGMQ), Glu404, and Arg469. Residues His514 and Glu516 contribute to the active site.

The protein belongs to the CTP synthase family. In terms of assembly, homotetramer.

The enzyme catalyses UTP + L-glutamine + ATP + H2O = CTP + L-glutamate + ADP + phosphate + 2 H(+). The catalysed reaction is L-glutamine + H2O = L-glutamate + NH4(+). It carries out the reaction UTP + NH4(+) + ATP = CTP + ADP + phosphate + 2 H(+). The protein operates within pyrimidine metabolism; CTP biosynthesis via de novo pathway; CTP from UDP: step 2/2. Allosterically activated by GTP, when glutamine is the substrate; GTP has no effect on the reaction when ammonia is the substrate. The allosteric effector GTP functions by stabilizing the protein conformation that binds the tetrahedral intermediate(s) formed during glutamine hydrolysis. Inhibited by the product CTP, via allosteric rather than competitive inhibition. In terms of biological role, catalyzes the ATP-dependent amination of UTP to CTP with either L-glutamine or ammonia as the source of nitrogen. Regulates intracellular CTP levels through interactions with the four ribonucleotide triphosphates. This chain is CTP synthase, found in Brucella anthropi (strain ATCC 49188 / DSM 6882 / CCUG 24695 / JCM 21032 / LMG 3331 / NBRC 15819 / NCTC 12168 / Alc 37) (Ochrobactrum anthropi).